A 196-amino-acid chain; its full sequence is Carnitine operon protein CaiE (196 aa).

The tract at residues 173–196 (TQPLRQMEENRPRLQGTTDVTPKR) is disordered. The segment covering 187 to 196 (QGTTDVTPKR) has biased composition (polar residues).

Belongs to the transferase hexapeptide repeat family.

The protein operates within amine and polyamine metabolism; carnitine metabolism. Functionally, overproduction of CaiE stimulates the activity of CaiB and CaiD. This Escherichia coli O157:H7 protein is Carnitine operon protein CaiE.